A 169-amino-acid polypeptide reads, in one-letter code: Peptide methionine sulfoxide reductase MsrA (169 aa).

Residue Cys10 is part of the active site.

It belongs to the MsrA Met sulfoxide reductase family.

It catalyses the reaction L-methionyl-[protein] + [thioredoxin]-disulfide + H2O = L-methionyl-(S)-S-oxide-[protein] + [thioredoxin]-dithiol. The catalysed reaction is [thioredoxin]-disulfide + L-methionine + H2O = L-methionine (S)-S-oxide + [thioredoxin]-dithiol. Its function is as follows. Has an important function as a repair enzyme for proteins that have been inactivated by oxidation. Catalyzes the reversible oxidation-reduction of methionine sulfoxide in proteins to methionine. This is Peptide methionine sulfoxide reductase MsrA from Streptococcus uberis (strain ATCC BAA-854 / 0140J).